We begin with the raw amino-acid sequence, 754 residues long: 5-methyltetrahydropteroyltriglutamate--homocysteine methyltransferase (754 aa).

5-methyltetrahydropteroyltri-L-glutamate-binding positions include 15–18 (RELK) and Lys114. Residues 430 to 432 (IGS) and Glu483 contribute to the L-homocysteine site. Residues 430-432 (IGS) and Glu483 contribute to the L-methionine site. Residues 514-515 (RC) and Trp560 contribute to the 5-methyltetrahydropteroyltri-L-glutamate site. Asp598 provides a ligand contact to L-homocysteine. Asp598 provides a ligand contact to L-methionine. Glu604 provides a ligand contact to 5-methyltetrahydropteroyltri-L-glutamate. His641, Cys643, and Glu665 together coordinate Zn(2+). Residue His694 is the Proton donor of the active site. Cys726 lines the Zn(2+) pocket.

It belongs to the vitamin-B12 independent methionine synthase family. It depends on Zn(2+) as a cofactor.

It carries out the reaction 5-methyltetrahydropteroyltri-L-glutamate + L-homocysteine = tetrahydropteroyltri-L-glutamate + L-methionine. It functions in the pathway amino-acid biosynthesis; L-methionine biosynthesis via de novo pathway; L-methionine from L-homocysteine (MetE route): step 1/1. Functionally, catalyzes the transfer of a methyl group from 5-methyltetrahydrofolate to homocysteine resulting in methionine formation. The chain is 5-methyltetrahydropteroyltriglutamate--homocysteine methyltransferase from Campylobacter jejuni subsp. jejuni serotype O:2 (strain ATCC 700819 / NCTC 11168).